A 342-amino-acid polypeptide reads, in one-letter code: UHRF1-like protein (342 aa).

Residues 41 to 149 (SEATTLATPS…SHPGSEEEDI (109 aa)) are disordered. Over residues 42 to 59 (EATTLATPSNLKTAGNQR) the composition is skewed to polar residues. Over residues 74–90 (NRSDSPRKRPTKDREDL) the composition is skewed to basic and acidic residues. Polar residues predominate over residues 115 to 141 (TREQVTFNSDRDTPNTPSRQIKSTHSH). The 155-residue stretch at 168 to 322 (GHIPGIGVGK…LMVCRYAFKR (155 aa)) folds into the YDG domain. Asp218 contacts DNA. A disordered region spans residues 236–257 (KGTKQNPKNLRTAPQTSHQSFD). A compositionally biased stretch (polar residues) spans 238–257 (TKQNPKNLRTAPQTSHQSFD).

It localises to the nucleus. In terms of biological role, involved in the maintenance of DNA methylation. Binds hemimethylated DNA. This chain is UHRF1-like protein, found in Cryptococcus neoformans var. grubii serotype A (strain H99 / ATCC 208821 / CBS 10515 / FGSC 9487) (Filobasidiella neoformans var. grubii).